The chain runs to 923 residues: Lysosomal acid alpha-glucosidase (923 aa).

Residues 1-17 (MKHQVLLPLLVTTAIIA) form the signal peptide. A propeptide spanning residues 18 to 36 (GSVGVYTHSKPLLGQSQDQ) is cleaved from the precursor. 3 N-linked (GlcNAc...) asparagine glycosylation sites follow: asparagine 65, asparagine 405, and asparagine 440. The Nucleophile role is filled by aspartate 455. Glutamate 458 is a catalytic residue. Aspartate 585 serves as the catalytic Proton donor. Asparagine 586, asparagine 621, asparagine 646, asparagine 848, asparagine 908, and asparagine 912 each carry an N-linked (GlcNAc...) asparagine glycan.

This sequence belongs to the glycosyl hydrolase 31 family.

Its subcellular location is the lysosome. The protein localises to the secreted. It catalyses the reaction Hydrolysis of terminal, non-reducing (1-&gt;4)-linked alpha-D-glucose residues with release of alpha-D-glucose.. Essential for the degradation of glycogen to glucose in lysosomes. Has both alpha-1,4 and alpha-1,6-glucosidase activity. In Tetrahymena pyriformis, this protein is Lysosomal acid alpha-glucosidase.